A 137-amino-acid polypeptide reads, in one-letter code: Small ribosomal subunit protein bS6 (137 aa).

Positions 113–137 (EEQREKKNFRKPFIKREEAATKENK) are disordered. Over residues 126–137 (IKREEAATKENK) the composition is skewed to basic and acidic residues.

Belongs to the bacterial ribosomal protein bS6 family.

Binds together with bS18 to 16S ribosomal RNA. This is Small ribosomal subunit protein bS6 from Mycoplasma capricolum subsp. capricolum (strain California kid / ATCC 27343 / NCTC 10154).